The primary structure comprises 235 residues: Rab-like protein 3 (235 aa).

A small GTPase-like region spans residues 1–235; sequence MASLDRVKVL…GGNFKSLHYD (235 aa). Residues 16-21, 148-150, and 179-180 contribute to the GTP site; these read GVGKSS, KLD, and DC.

It belongs to the small GTPase superfamily. Rab family. As to quaternary structure, homodimer.

Its function is as follows. Required for KRAS signaling regulation and modulation of cell proliferation. Regulator of KRAS prenylation, and probably prenylation of other small GTPases. Required for lymphocyte development and function. Not required for myeloid cell development. In Xenopus laevis (African clawed frog), this protein is Rab-like protein 3 (rabl3).